Here is a 1170-residue protein sequence, read N- to C-terminus: WD repeat-containing protein 35 (1170 aa).

WD repeat units follow at residues 12-51, 69-108, 113-152, 154-193, and 491-528; these read PNNV…DDSK, GHSG…WYEE, RNKS…IWGK, LKGI…IMKM, and GTRD…LIQK.

Component of the IFT complex A (IFT-A) complex. IFT-A complex is divided into a core subcomplex composed of IFT122:IFT140:WDR19 which is associated with TULP3 and a peripheral subcomplex composed of IFT43:WDR35:TTC21B. Interacts directy with IFT122, ITF43 and TTC21B. Interacts with IFT43. Interacts with CFAP61. In terms of tissue distribution, expressed at high levels in testis and at lower levels in the brain (at protein level). Also present in other tissues, including heart, uterus, spinal cord, ovary, liver, kidney, lung, pancreas and stomach.

The protein localises to the cytoplasm. It is found in the cytoskeleton. The protein resides in the microtubule organizing center. Its subcellular location is the centrosome. It localises to the cilium axoneme. The protein localises to the cilium basal body. Functionally, as a component of the IFT complex A (IFT-A), a complex required for retrograde ciliary transport and entry into cilia of G protein-coupled receptors (GPCRs), it is involved in ciliogenesis and ciliary protein trafficking. May promote CASP3 activation and TNF-stimulated apoptosis. The polypeptide is WD repeat-containing protein 35 (Wdr35) (Rattus norvegicus (Rat)).